Here is a 129-residue protein sequence, read N- to C-terminus: Flagellar assembly factor FliW (129 aa).

Belongs to the FliW family. Interacts with flagellins FlaA and FlaB but not with FlaC; recognizes glycosylated and non-glycosylated FlaA equally. Interacts with CsrA. May form a 3-way complex of flagellin, FliS and FliW simultaneously in which FliS and FliW do not directly interact.

Its subcellular location is the cytoplasm. Acts as an anti-CsrA protein, binds CsrA and prevents it from repressing translation of its target genes, one of which is flagellin. Binds to flagellin and participates in the assembly of the flagellum. Its function is as follows. Overexpression leads to increased levels of FlaA and FlaB, but levels of FlaC remain stable. Involved in post-transcriptional regulation of flagellin biosynthesis. This Campylobacter jejuni subsp. jejuni serotype O:6 (strain 81116 / NCTC 11828) protein is Flagellar assembly factor FliW.